A 184-amino-acid chain; its full sequence is Chromobox protein homolog hpl-1 (184 aa).

Residues 1-13 (MSRQNPVRSTRGN) show a composition bias toward polar residues. 2 disordered regions span residues 1 to 27 (MSRQNPVRSTRGNSLRAREAQQAQDAP) and 87 to 115 (AAKRTTRKRRYSPQPSTSSSAELQPSTSD). The Chromo domain occupies 37-95 (FVVEKVLNKRLTRGGSEYYIKWQGFPESECSWEPIENLQCDRMIQEYEKEAAKRTTRKR). A compositionally biased stretch (polar residues) spans 99-115 (PQPSTSSSAELQPSTSD).

In terms of assembly, interacts with histone demethylase spr-5. Interacts with chromobox protein homolog hpl-2. Interacts with histone H3 tails methylated at 'Lys-9' (H3K9me3) and 'Lys-23'(H3K23me2). Interacts with histone H1 variant his-24 (when monomethylated at 'Lys-14'); the interaction is direct. May interact with the REST corepressor rcor-1, histone deacetylase hda-1, and the histone demethylase lsd-1.

It localises to the nucleus. Functionally, seems to be involved in transcriptional silencing in heterochromatin-like complexes. Involved in epigenetic repression. Probably does not act as global transcriptional repressor. Plays a role in linking epigenetic regulation with the innate immune response. Acting in concert with chromobox protein homolog hpl-2 and histone H1 protein his-24, involved in reproduction, somatic gonad development, male tail development and vulval cell fate decisions; perhaps as a result of modulating expression of Hox genes mab-5 and egl-5. Role in growth and somatic gonad development is antagonized by histone-lysine N-methyltransferase set-2/SET1. Required for larval development, acting redundantly with hpl-2. Plays a role in the formation of the vulva and in fertility, acting together with a CoREST-like complex, and hpl-2. This chain is Chromobox protein homolog hpl-1, found in Caenorhabditis elegans.